The chain runs to 708 residues: Ubiquitin thioesterase Zranb1 (708 aa).

The segment at 3–33 (EHGIKWACEYCTYENWPSAIKCTMCRAQRPS) adopts a RanBP2-type 1 zinc-finger fold. Residues Cys10, Cys13, Cys24, and Cys27 each contribute to the Zn(2+) site. The tract at residues 38–73 (TEDPFKSGSSDVGRDWDPSSTEGGSSPLICPDSSAR) is disordered. 2 RanBP2-type zinc fingers span residues 84–113 (NANK…QRRT) and 149–178 (RTQH…PRPN). Zn(2+) is bound by residues Cys90, Cys93, Cys104, Cys107, Cys155, Cys158, Cys169, and Cys172. Residues 202 to 224 (RWRGGCSSGNSQRRSPPTTKRDS) form a disordered region. Positions 209–219 (SGNSQRRSPPT) are enriched in polar residues. ANK repeat units lie at residues 260-290 (KKTD…SGGD) and 313-340 (YTLV…QQAA). One can recognise an OTU domain in the interval 432–592 (LYALWNRTAG…RGHFSALVAM (161 aa)). Cys443 (nucleophile) is an active-site residue. His585 functions as the Proton acceptor in the catalytic mechanism.

This sequence belongs to the peptidase C64 family. As to quaternary structure, interacts with TRAF6. Interacts with APC.

The protein resides in the cytoplasm. Its subcellular location is the nucleus. The catalysed reaction is Thiol-dependent hydrolysis of ester, thioester, amide, peptide and isopeptide bonds formed by the C-terminal Gly of ubiquitin (a 76-residue protein attached to proteins as an intracellular targeting signal).. In terms of biological role, ubiquitin thioesterase, which specifically hydrolyzes 'Lys-29'-linked and 'Lys-33'-linked diubiquitin. Also cleaves 'Lys-63'-linked chains, but with 40-fold less efficiency compared to 'Lys-29'-linked ones. Positive regulator of the Wnt signaling pathway that deubiquitinates APC protein, a negative regulator of Wnt-mediated transcription. Acts as a regulator of autophagy by mediating deubiquitination of PIK3C3/VPS34, thereby promoting autophagosome maturation. Plays a role in the regulation of cell morphology and cytoskeletal organization. Required in the stress fiber dynamics and cell migration. The chain is Ubiquitin thioesterase Zranb1 from Mus musculus (Mouse).